Consider the following 353-residue polypeptide: Protein RecA (353 aa).

Residue Gly-65–Thr-72 coordinates ATP. Over residues Asp-334–Asn-345 the composition is skewed to basic and acidic residues. The segment at Asp-334–Phe-353 is disordered.

The protein belongs to the RecA family.

The protein localises to the cytoplasm. In terms of biological role, can catalyze the hydrolysis of ATP in the presence of single-stranded DNA, the ATP-dependent uptake of single-stranded DNA by duplex DNA, and the ATP-dependent hybridization of homologous single-stranded DNAs. It interacts with LexA causing its activation and leading to its autocatalytic cleavage. The sequence is that of Protein RecA from Edwardsiella ictaluri (strain 93-146).